The primary structure comprises 780 residues: LPS-assembly protein LptD (780 aa).

An N-terminal signal peptide occupies residues 1–24; sequence MKKRLPTLLASLIGSALYSQQALA.

This sequence belongs to the LptD family. As to quaternary structure, component of the lipopolysaccharide transport and assembly complex. Interacts with LptE and LptA.

The protein resides in the cell outer membrane. Together with LptE, is involved in the assembly of lipopolysaccharide (LPS) at the surface of the outer membrane. The polypeptide is LPS-assembly protein LptD (Sodalis glossinidius (strain morsitans)).